The following is a 40-amino-acid chain: 67 kDa serum albumin (40 aa).

In terms of domain architecture, Albumin spans 1–40; sequence DAEHKSEIVHRFNDLKEEKFKGAALITFAQFLHKKPEEEA. H4 provides a ligand contact to Cu cation.

This sequence belongs to the ALB/AFP/VDB family. Plasma.

Its subcellular location is the secreted. In terms of biological role, serum albumin, the main protein of plasma, has a good binding capacity for water, Ca(2+), Na(+), K(+), fatty acids, hormones, bilirubin and drugs. Its main function is the regulation of the colloidal osmotic pressure of blood. This is 67 kDa serum albumin from Trachemys scripta (Red-eared slider turtle).